Here is a 65-residue protein sequence, read N- to C-terminus: Large ribosomal subunit protein bL32 (65 aa).

Belongs to the bacterial ribosomal protein bL32 family.

The sequence is that of Large ribosomal subunit protein bL32 (rpmF) from Rickettsia prowazekii (strain Madrid E).